A 682-amino-acid chain; its full sequence is Potassium-transporting ATPase ATP-binding subunit (682 aa).

4 consecutive transmembrane segments (helical) span residues 35-55 (VMFI…AMAG), 62-82 (ATFT…ANFA), 219-239 (IALT…TATI), and 254-274 (VLVA…LSAI). The 4-aspartylphosphate intermediate role is filled by aspartate 307. Residues aspartate 344, glutamate 348, 377-384 (FTAQTRMS), and lysine 395 each bind ATP. Positions 518 and 522 each coordinate Mg(2+). A run of 3 helical transmembrane segments spans residues 588–608 (FAII…LNVM), 616–636 (AILS…PLAL), and 656–676 (IYGL…DLLL).

It belongs to the cation transport ATPase (P-type) (TC 3.A.3) family. Type IA subfamily. The system is composed of three essential subunits: KdpA, KdpB and KdpC.

The protein localises to the cell inner membrane. It catalyses the reaction K(+)(out) + ATP + H2O = K(+)(in) + ADP + phosphate + H(+). Functionally, part of the high-affinity ATP-driven potassium transport (or Kdp) system, which catalyzes the hydrolysis of ATP coupled with the electrogenic transport of potassium into the cytoplasm. This subunit is responsible for energy coupling to the transport system and for the release of the potassium ions to the cytoplasm. This Klebsiella pneumoniae (strain 342) protein is Potassium-transporting ATPase ATP-binding subunit.